The following is an 829-amino-acid chain: Probable beta-glucosidase H (829 aa).

A glycan (N-linked (GlcNAc...) asparagine) is linked at N13. D225 is an active-site residue. Residues N304, N473, N602, N627, N664, and N749 are each glycosylated (N-linked (GlcNAc...) asparagine). The PA14 domain maps to 389 to 548 (RMLSNAVIHF…DPEQMVANAV (160 aa)).

This sequence belongs to the glycosyl hydrolase 3 family.

It localises to the secreted. The enzyme catalyses Hydrolysis of terminal, non-reducing beta-D-glucosyl residues with release of beta-D-glucose.. It participates in glycan metabolism; cellulose degradation. Functionally, beta-glucosidases are one of a number of cellulolytic enzymes involved in the degradation of cellulosic biomass. Catalyzes the last step releasing glucose from the inhibitory cellobiose. The sequence is that of Probable beta-glucosidase H (bglH) from Aspergillus fumigatus (strain CBS 144.89 / FGSC A1163 / CEA10) (Neosartorya fumigata).